The chain runs to 70 residues: MLFFPWWVYLCIVGIIFSAYKLVAAAKEEEKVDQAFIEKEGQIYMERMEKERERRSSQQHEEENQNHSIA.

Residues Phe-3–Val-23 traverse the membrane as a helical segment. Residues Met-48 to Ala-70 form a disordered region.

It localises to the cell membrane. In terms of biological role, required for efficient sporulation. The chain is Sporulation protein YhaL (yhaL) from Bacillus subtilis (strain 168).